The sequence spans 154 residues: Ferredoxin C 1, chloroplastic (154 aa).

Residues 1-56 (MATLPLPTQTSTISLPKPYLSNSFSFPLRNATLSTTTNRRNFLTTGRIIARAYKVV) constitute a chloroplast transit peptide. The 86-residue stretch at 57–142 (VEHDGKTTEL…DCHIKMIPEE (86 aa)) folds into the 2Fe-2S ferredoxin-type domain. Residues Cys-89, Cys-94, Cys-97, and Cys-126 each coordinate [2Fe-2S] cluster.

Belongs to the 2Fe2S plant-type ferredoxin family. [2Fe-2S] cluster is required as a cofactor.

It localises to the plastid. Its subcellular location is the chloroplast. Functionally, ferredoxins are iron-sulfur proteins that transfer electrons in a wide variety of metabolic reactions. Mediates alternative electron partitioning in conditions of acceptor limitation at photosystem I. Accepts electrons from photosystem I (PSI) and is capable of electron transfer with FNR, but cannot support photoreduction of NADP(+). This Arabidopsis thaliana (Mouse-ear cress) protein is Ferredoxin C 1, chloroplastic.